A 180-amino-acid polypeptide reads, in one-letter code: Shikimate kinase (180 aa).

ATP is bound at residue 14 to 19 (GAGKTC). T18 lines the Mg(2+) pocket. Substrate-binding residues include D36, R60, and G82. Residue R120 participates in ATP binding. Residue R139 coordinates substrate.

The protein belongs to the shikimate kinase family. Monomer. Requires Mg(2+) as cofactor.

The protein resides in the cytoplasm. It catalyses the reaction shikimate + ATP = 3-phosphoshikimate + ADP + H(+). Its pathway is metabolic intermediate biosynthesis; chorismate biosynthesis; chorismate from D-erythrose 4-phosphate and phosphoenolpyruvate: step 5/7. Functionally, catalyzes the specific phosphorylation of the 3-hydroxyl group of shikimic acid using ATP as a cosubstrate. The chain is Shikimate kinase from Stenotrophomonas maltophilia (strain K279a).